Here is a 550-residue protein sequence, read N- to C-terminus: MAAKDVVFGDSARTKMVEGVNILANAVKTTLGPKGRNVVIERSFGGPTITKDGVSVAKEIELKDKLQNMGAQMVKEVASKTADIAGDGTTTATVLAQSIVREGMKYVVSGHNPMDLKRGIDKAVTAAIAELAKISKPCTTTKEIAQVGSISANSDHSIGQRIAEAMEKVGKEGVITVEDGKSLEDELEVVEGMQFDRGYLSPYFINQPEKQVAVLESPYVLLFDKKIANIRDLLPVLEQVAKSGRPLLIIAEDVEGEALATLVVNNIRGIIKTCAVKAPGFGDRRKAMLEDIAILTGGTVIAEEIGLTLEKATLEHLGQAKRIEVGKENTIIIDGAGDAKAIEARVKNIRVQIEEATSDYDKEKLQERVAKLAGGVAVIRVGAATEVEMKEKKARVDDALHATRAAVEEGIVPGGGVALIRAMQGIKGLKGDNADQDAGISIVLRAMQEPLRTIVSNAGEDAGVVVNAVQASTGNNGYNAATGEYGDLVAQGVIDPTKVTKTALVNAASVAGLLLTTDCAISEAPKDESGAGGMPDMGGMGGMGGMGGMM.

ATP-binding positions include 30–33, Lys51, 87–91, Gly415, 479–481, and Asp495; these read TLGP, DGTTT, and NAA.

The protein belongs to the chaperonin (HSP60) family. In terms of assembly, forms a cylinder of 14 subunits composed of two heptameric rings stacked back-to-back. Interacts with the co-chaperonin GroES.

Its subcellular location is the cytoplasm. It catalyses the reaction ATP + H2O + a folded polypeptide = ADP + phosphate + an unfolded polypeptide.. In terms of biological role, together with its co-chaperonin GroES, plays an essential role in assisting protein folding. The GroEL-GroES system forms a nano-cage that allows encapsulation of the non-native substrate proteins and provides a physical environment optimized to promote and accelerate protein folding. The polypeptide is Chaperonin GroEL (Polynucleobacter asymbioticus (strain DSM 18221 / CIP 109841 / QLW-P1DMWA-1) (Polynucleobacter necessarius subsp. asymbioticus)).